Here is a 467-residue protein sequence, read N- to C-terminus: Peptidoglycan-N-acetylmuramic acid deacetylase PdaC (467 aa).

The chain crosses the membrane as a helical span at residues 6 to 26; the sequence is IKWFHVLIAVVCVVGLIGFFH. One can recognise a NodB homology domain in the interval 278–452; it reads KVIALTFDDG…KLTDQGYQLV (175 aa). The active-site Proton acceptor is aspartate 285. A divalent metal cation-binding residues include aspartate 286, histidine 336, and histidine 340. Catalysis depends on histidine 427, which acts as the Proton donor.

It in the N-terminal section; belongs to the RsiV family. In the C-terminal section; belongs to the polysaccharide deacetylase family.

The protein localises to the cell membrane. Activated by divalent metal cations; Mn(2+) is the most efficient, followed by Ca(2+) and Mg(2+). In contrast to PgdA from S.pneumoniae, these ions are not absolutely required for deacetylase activity. Functionally, catalyzes the deacetylation of N-acetylmuramic acid (MurNAc) residues in peptidoglycan, a modification that confers resistance to lysosyme. Is not able to deacetylate N-acetylglucosamine (GlcNAc) residues in peptidoglycan, but can deacylate chitin oligomers such as GlcNAc4 and GlcNAc5. Is essentially not active toward chitosan (partially deacetylated GlcNAc polymer) and has very low activity toward chitin (GlcNAc polymer). Does not deacetylate GlcNAc. This chain is Peptidoglycan-N-acetylmuramic acid deacetylase PdaC (pdaC), found in Bacillus subtilis (strain 168).